Reading from the N-terminus, the 464-residue chain is 3-isopropylmalate dehydratase large subunit (464 aa).

[4Fe-4S] cluster is bound by residues cysteine 337, cysteine 397, and cysteine 400.

It belongs to the aconitase/IPM isomerase family. LeuC type 1 subfamily. Heterodimer of LeuC and LeuD. [4Fe-4S] cluster is required as a cofactor.

It catalyses the reaction (2R,3S)-3-isopropylmalate = (2S)-2-isopropylmalate. It functions in the pathway amino-acid biosynthesis; L-leucine biosynthesis; L-leucine from 3-methyl-2-oxobutanoate: step 2/4. Its function is as follows. Catalyzes the isomerization between 2-isopropylmalate and 3-isopropylmalate, via the formation of 2-isopropylmaleate. The chain is 3-isopropylmalate dehydratase large subunit from Bacillus cereus (strain AH187).